The following is a 172-amino-acid chain: NADH-ubiquinone oxidoreductase chain 6 (172 aa).

Transmembrane regions (helical) follow at residues 1 to 21 (MTYF…AVAS), 27 to 47 (YGVV…LSLG), 48 to 68 (VSFV…VVFV), 87 to 107 (VVGY…VGGF), and 138 to 158 (CGVG…FVVL).

The protein belongs to the complex I subunit 6 family.

The protein localises to the mitochondrion membrane. It catalyses the reaction a ubiquinone + NADH + 5 H(+)(in) = a ubiquinol + NAD(+) + 4 H(+)(out). Functionally, core subunit of the mitochondrial membrane respiratory chain NADH dehydrogenase (Complex I) that is believed to belong to the minimal assembly required for catalysis. Complex I functions in the transfer of electrons from NADH to the respiratory chain. The immediate electron acceptor for the enzyme is believed to be ubiquinone. This chain is NADH-ubiquinone oxidoreductase chain 6 (MT-ND6), found in Uria lomvia (Thick-billed murre).